The primary structure comprises 440 residues: Xylose isomerase (440 aa).

Residues His-101 and Asp-104 contribute to the active site. Positions 232, 268, 271, 296, 307, 309, and 339 each coordinate Mg(2+).

This sequence belongs to the xylose isomerase family. Homotetramer. The cofactor is Mg(2+).

Its subcellular location is the cytoplasm. It carries out the reaction alpha-D-xylose = alpha-D-xylulofuranose. In Escherichia coli (strain SE11), this protein is Xylose isomerase.